The sequence spans 363 residues: 3-isopropylmalate dehydrogenase (363 aa).

79–92 lines the NAD(+) pocket; sequence GPKWEHLPPNDQPE. Arginine 100, arginine 110, arginine 139, and aspartate 228 together coordinate substrate. Mg(2+) is bound by residues aspartate 228, aspartate 252, and aspartate 256. Residue 286 to 298 coordinates NAD(+); the sequence is GSAPDIAGKNIAN.

The protein belongs to the isocitrate and isopropylmalate dehydrogenases family. LeuB type 1 subfamily. As to quaternary structure, homodimer. Mg(2+) serves as cofactor. The cofactor is Mn(2+).

The protein resides in the cytoplasm. It catalyses the reaction (2R,3S)-3-isopropylmalate + NAD(+) = 4-methyl-2-oxopentanoate + CO2 + NADH. It participates in amino-acid biosynthesis; L-leucine biosynthesis; L-leucine from 3-methyl-2-oxobutanoate: step 3/4. Its function is as follows. Catalyzes the oxidation of 3-carboxy-2-hydroxy-4-methylpentanoate (3-isopropylmalate) to 3-carboxy-4-methyl-2-oxopentanoate. The product decarboxylates to 4-methyl-2 oxopentanoate. The sequence is that of 3-isopropylmalate dehydrogenase from Aliivibrio fischeri (strain ATCC 700601 / ES114) (Vibrio fischeri).